The sequence spans 426 residues: Glutamyl-tRNA reductase (426 aa).

Substrate contacts are provided by residues 49–52, Ser109, 114–116, and Gln120; these read TCNR and EGQ. Cys50 serves as the catalytic Nucleophile. 189-194 contacts NADP(+); that stretch reads GAGKMS.

It belongs to the glutamyl-tRNA reductase family. Homodimer.

It catalyses the reaction (S)-4-amino-5-oxopentanoate + tRNA(Glu) + NADP(+) = L-glutamyl-tRNA(Glu) + NADPH + H(+). Its pathway is porphyrin-containing compound metabolism; protoporphyrin-IX biosynthesis; 5-aminolevulinate from L-glutamyl-tRNA(Glu): step 1/2. The protein operates within porphyrin-containing compound metabolism; chlorophyll biosynthesis. Functionally, catalyzes the NADPH-dependent reduction of glutamyl-tRNA(Glu) to glutamate 1-semialdehyde (GSA). In Thermosynechococcus vestitus (strain NIES-2133 / IAM M-273 / BP-1), this protein is Glutamyl-tRNA reductase.